Consider the following 414-residue polypeptide: Isocitrate dehydrogenase [NADP] cytoplasmic (414 aa).

Residue Ser-2 is modified to N-acetylserine. Tyr-42 bears the Phosphotyrosine mark. 75-77 serves as a coordination point for NADP(+); sequence TIT. Position 77 (Thr-77) interacts with substrate. Position 81 is an N6-acetyllysine (Lys-81). Arg-82 provides a ligand contact to NADP(+). Substrate contacts are provided by residues 94 to 100 and Arg-109; that span reads SPNGTIR. Position 126 is an N6-succinyllysine (Lys-126). Substrate-binding residues include Arg-132 and Lys-212. 3 positions are modified to N6-acetyllysine: Lys-224, Lys-233, and Lys-243. Asp-252 serves as a coordination point for Mn(2+). Lys-260 contacts NADP(+). Asp-275 and Asp-279 together coordinate Mn(2+). 310–315 is an NADP(+) binding site; it reads GTVTRH. Position 321 is an N6-acetyllysine (Lys-321). Residue Asn-328 participates in NADP(+) binding. At Ser-389 the chain carries Phosphoserine. Residue Lys-400 is modified to N6-succinyllysine.

Belongs to the isocitrate and isopropylmalate dehydrogenases family. Homodimer. Mg(2+) is required as a cofactor. Requires Mn(2+) as cofactor. Post-translationally, acetylation at Lys-374 dramatically reduces catalytic activity.

Its subcellular location is the cytoplasm. The protein resides in the cytosol. It is found in the peroxisome. It carries out the reaction D-threo-isocitrate + NADP(+) = 2-oxoglutarate + CO2 + NADPH. Catalyzes the NADP(+)-dependent oxidative decarboxylation of isocitrate (D-threo-isocitrate) to 2-ketoglutarate (2-oxoglutarate), which is required by other enzymes such as the phytanoyl-CoA dioxygenase. Plays a critical role in the generation of NADPH, an important cofactor in many biosynthesis pathways. May act as a corneal epithelial crystallin and may be involved in maintaining corneal epithelial transparency. The sequence is that of Isocitrate dehydrogenase [NADP] cytoplasmic (IDH1) from Homo sapiens (Human).